The primary structure comprises 182 residues: Ribosome maturation factor RimM (182 aa).

Residues 101–182 form the PRC barrel domain; that stretch reads VDEYYWSDLK…RIYVNWGVDY (82 aa).

It belongs to the RimM family. Binds ribosomal protein uS19.

Its subcellular location is the cytoplasm. Functionally, an accessory protein needed during the final step in the assembly of 30S ribosomal subunit, possibly for assembly of the head region. Essential for efficient processing of 16S rRNA. May be needed both before and after RbfA during the maturation of 16S rRNA. It has affinity for free ribosomal 30S subunits but not for 70S ribosomes. The sequence is that of Ribosome maturation factor RimM from Acinetobacter baylyi (strain ATCC 33305 / BD413 / ADP1).